A 618-amino-acid polypeptide reads, in one-letter code: 1-deoxy-D-xylulose-5-phosphate synthase (618 aa).

Thiamine diphosphate is bound by residues H70 and 111 to 113 (GHS). Position 142 (D142) interacts with Mg(2+). Thiamine diphosphate is bound by residues 143-144 (GS), N171, Y278, and E360. Residue N171 participates in Mg(2+) binding.

This sequence belongs to the transketolase family. DXPS subfamily. Homodimer. It depends on Mg(2+) as a cofactor. Thiamine diphosphate is required as a cofactor.

It carries out the reaction D-glyceraldehyde 3-phosphate + pyruvate + H(+) = 1-deoxy-D-xylulose 5-phosphate + CO2. It participates in metabolic intermediate biosynthesis; 1-deoxy-D-xylulose 5-phosphate biosynthesis; 1-deoxy-D-xylulose 5-phosphate from D-glyceraldehyde 3-phosphate and pyruvate: step 1/1. In terms of biological role, catalyzes the acyloin condensation reaction between C atoms 2 and 3 of pyruvate and glyceraldehyde 3-phosphate to yield 1-deoxy-D-xylulose-5-phosphate (DXP). The polypeptide is 1-deoxy-D-xylulose-5-phosphate synthase (Helicobacter pylori (strain G27)).